Reading from the N-terminus, the 81-residue chain is UPF0248 protein TK0315 (81 aa).

The protein belongs to the UPF0248 family.

This chain is UPF0248 protein TK0315, found in Thermococcus kodakarensis (strain ATCC BAA-918 / JCM 12380 / KOD1) (Pyrococcus kodakaraensis (strain KOD1)).